Reading from the N-terminus, the 236-residue chain is tRNA (guanine-N(7)-)-methyltransferase (236 aa).

Residues Asp35, Glu60, Asn87, and Asp113 each coordinate S-adenosyl-L-methionine. Asp113 is an active-site residue. Lys117 and Asp149 together coordinate substrate. The segment at 217–236 (EFEQHWQEIDNPGNAPTPDA) is disordered.

It belongs to the class I-like SAM-binding methyltransferase superfamily. TrmB family.

The catalysed reaction is guanosine(46) in tRNA + S-adenosyl-L-methionine = N(7)-methylguanosine(46) in tRNA + S-adenosyl-L-homocysteine. It participates in tRNA modification; N(7)-methylguanine-tRNA biosynthesis. In terms of biological role, catalyzes the formation of N(7)-methylguanine at position 46 (m7G46) in tRNA. This Synechococcus sp. (strain CC9902) protein is tRNA (guanine-N(7)-)-methyltransferase.